The sequence spans 407 residues: Tryptophan synthase beta chain (407 aa).

Lys-91 is modified (N6-(pyridoxal phosphate)lysine).

This sequence belongs to the TrpB family. As to quaternary structure, tetramer of two alpha and two beta chains. The cofactor is pyridoxal 5'-phosphate.

The enzyme catalyses (1S,2R)-1-C-(indol-3-yl)glycerol 3-phosphate + L-serine = D-glyceraldehyde 3-phosphate + L-tryptophan + H2O. Its pathway is amino-acid biosynthesis; L-tryptophan biosynthesis; L-tryptophan from chorismate: step 5/5. Functionally, the beta subunit is responsible for the synthesis of L-tryptophan from indole and L-serine. This is Tryptophan synthase beta chain from Streptococcus pneumoniae (strain JJA).